A 214-amino-acid polypeptide reads, in one-letter code: MGRRPARCYRYCKNKPYPKSRFCRGVPDAKIRIFDLGRKKAKVDEFPLCGHMVSDEYEQLSSEALEAARICANKYMVKSCGKDGFHIRVRLHPFHVIRINKMLSCAGADRLQTGMRGAFGKPQGTVARVHIGQVIMSIRTKLQNKEHVIEALRRAKFKFPGRQKIHISKKWGFTKFNADEFEDKVAKKRLIPDGCGVKYVPNRGPLDKWRALHS.

It belongs to the universal ribosomal protein uL16 family. In terms of assembly, component of the 60S large ribosomal subunit (LSU).

The protein resides in the cytoplasm. Functionally, testis-specific component of the ribosome, which is required for the transition from prophase to metaphase in male meiosis I. Compensates for the inactivated X-linked RPL10 paralog during spermatogenesis. The ribosome is a large ribonucleoprotein complex responsible for the synthesis of proteins in the cell. The small ribosomal subunit (SSU) binds messenger RNAs (mRNAs) and translates the encoded message by selecting cognate aminoacyl-transfer RNA (tRNA) molecules. The large subunit (LSU) contains the ribosomal catalytic site termed the peptidyl transferase center (PTC), which catalyzes the formation of peptide bonds, thereby polymerizing the amino acids delivered by tRNAs into a polypeptide chain. The nascent polypeptides leave the ribosome through a tunnel in the LSU and interact with protein factors that function in enzymatic processing, targeting, and the membrane insertion of nascent chains at the exit of the ribosomal tunnel. The protein is Large ribosomal subunit protein uL16-like (RPL10L) of Bos taurus (Bovine).